Here is a 449-residue protein sequence, read N- to C-terminus: Probable D-serine dehydratase (449 aa).

Residue lysine 119 is modified to N6-(pyridoxal phosphate)lysine.

Belongs to the serine/threonine dehydratase family. DsdA subfamily. Pyridoxal 5'-phosphate serves as cofactor.

It catalyses the reaction D-serine = pyruvate + NH4(+). The sequence is that of Probable D-serine dehydratase from Pseudomonas putida (strain ATCC 700007 / DSM 6899 / JCM 31910 / BCRC 17059 / LMG 24140 / F1).